Reading from the N-terminus, the 554-residue chain is Trimethyltridecatetraene synthase (554 aa).

The helical transmembrane segment at 1–21 (MSAAVALAVILAVYVVLRYIS) threads the bilayer. C464 serves as a coordination point for heme.

Belongs to the cytochrome P450 family. Heme serves as cofactor.

The protein resides in the membrane. The catalysed reaction is (6E,10E)-geranyllinalool + reduced [NADPH--hemoprotein reductase] + O2 = (3E,7E)-4,8,12-trimethyltrideca 1,3,7,11-tetraene + but-3-en-2-one + oxidized [NADPH--hemoprotein reductase] + 2 H2O + H(+). It functions in the pathway secondary metabolite biosynthesis; terpenoid biosynthesis. Component of the volatile terpenes biosynthesis pathways. Converts mainly geranyllinalool to trimethyltridecatetraene (TMTT). The chain is Trimethyltridecatetraene synthase from Zea mays (Maize).